The following is a 353-amino-acid chain: UPF0283 membrane protein YcjF (353 aa).

The segment covering 1 to 19 has biased composition (basic and acidic residues); it reads MSEPLKPRIDFAEPLKEEP. Residues 1-35 form a disordered region; sequence MSEPLKPRIDFAEPLKEEPTSAFKAQQTFSEAESR. Topologically, residues 1 to 69 are periplasmic; the sequence is MSEPLKPRID…LRPKRSLWRK (69 aa). Residues 70–90 traverse the membrane as a helical segment; the sequence is MVMGGLALFGASVVGQGVQWT. The Cytoplasmic segment spans residues 91 to 99; the sequence is MNAWQTQDW. A helical membrane pass occupies residues 100 to 120; the sequence is VALGGCAAGALIVGAGVGSVV. At 121–212 the chain is on the periplasmic side; sequence TEWRRLWRLR…ARREISRFAA (92 aa). Residues 213-233 traverse the membrane as a helical segment; it reads ESTLMIAVSPLALVDMAFIAW. Topologically, residues 234–353 are cytoplasmic; the sequence is RNLRLINRIA…LQKSKSSPEK (120 aa).

This sequence belongs to the UPF0283 family.

The protein localises to the cell inner membrane. The sequence is that of UPF0283 membrane protein YcjF (ycjF) from Salmonella typhimurium (strain LT2 / SGSC1412 / ATCC 700720).